The sequence spans 422 residues: MAETKDAAQMLVTFKDVAVTFTREEWRQLDLAQRTLYREVMLETCGLLVSLGHRVPKPELVHLLEHGQELWIVKRGLSHATCAGDRAQVHTREPTTYPPVLSERAFLRGSLTLESSTSSDSRLGRARDEEGLLEMQKGKVTPETDLHKETHLGKVSLEGEGLGTDDGLHSRALQEWLSADVLHECDSQQPGKDALIHAGTNPYKCKQCGKGFNRKWYLVRHQRVHTGMKPYECNACGKAFSQSSTLIRHYLIHTGEKPYKCLECGKAFKRRSYLMQHHPIHTGEKPYECSQCRKAFTHRSTFIRHNRTHTGEKPFECKECEKAFSNRAHLIQHYIIHTGEKPYDCMACGKAFRCSSELIQHQRIHTGEKPYECTQCGKAFHRSTYLIQHSVIHTGEMPYKCIECGKAFKRRSHLLQHQRVHT.

The region spanning 12 to 83 (VTFKDVAVTF…KRGLSHATCA (72 aa)) is the KRAB domain. The disordered stretch occupies residues 113 to 158 (LESSTSSDSRLGRARDEEGLLEMQKGKVTPETDLHKETHLGKVSLE). Residues 122–152 (RLGRARDEEGLLEMQKGKVTPETDLHKETHL) show a composition bias toward basic and acidic residues. 8 C2H2-type zinc fingers span residues 203–225 (YKCK…QRVH), 231–253 (YECN…YLIH), 259–281 (YKCL…HPIH), 287–309 (YECS…NRTH), 315–337 (FECK…YIIH), 343–365 (YDCM…QRIH), 371–393 (YECT…SVIH), and 399–421 (YKCI…QRVH).

The protein belongs to the krueppel C2H2-type zinc-finger protein family.

It localises to the nucleus. May be involved in transcriptional regulation. The protein is Zinc finger protein 550 (ZNF550) of Homo sapiens (Human).